Consider the following 246-residue polypeptide: tRNA pseudouridine synthase A (246 aa).

The active-site Nucleophile is the D52. Y111 is a binding site for substrate.

Belongs to the tRNA pseudouridine synthase TruA family. Homodimer.

The catalysed reaction is uridine(38/39/40) in tRNA = pseudouridine(38/39/40) in tRNA. In terms of biological role, formation of pseudouridine at positions 38, 39 and 40 in the anticodon stem and loop of transfer RNAs. This Borreliella afzelii (strain PKo) (Borrelia afzelii) protein is tRNA pseudouridine synthase A.